The chain runs to 324 residues: Probable peptidylglycine alpha-hydroxylating monooxygenase 1 (324 aa).

Positions 1-22 (MPRFYLLSSCALLAFATSFCNA) are cleaved as a signal peptide. 2 disulfides stabilise this stretch: Cys-41-Cys-85 and Cys-73-Cys-101. Cu cation contacts are provided by His-66 and His-67. His-142 contacts Cu cation. N-linked (GlcNAc...) asparagine glycosylation occurs at Asn-182. The Cu cation site is built by His-207, His-209, and Met-284. Cysteines 264 and 285 form a disulfide.

This sequence belongs to the copper type II ascorbate-dependent monooxygenase family. Requires Cu(2+) as cofactor.

The protein resides in the secreted. It carries out the reaction a [peptide]-C-terminal glycine + 2 L-ascorbate + O2 = a [peptide]-C-terminal (2S)-2-hydroxyglycine + 2 monodehydro-L-ascorbate radical + H2O. Monooxygenase that catalyzes an essential reaction in C-terminal alpha-amidation of peptides. Produces an unstable peptidyl(2-hydroxyglycine) intermediate. C-terminal amidation of peptides such as neuropeptides is essential for full biological activity. The sequence is that of Probable peptidylglycine alpha-hydroxylating monooxygenase 1 from Caenorhabditis elegans.